Reading from the N-terminus, the 393-residue chain is Squamosa promoter-binding-like protein 11 (393 aa).

The tract at residues 74–96 (QSTSINSSSPEAKRCKLASESSP) is disordered. The segment at 172–249 (VPRCQIDGCE…SHHNARRRKP (78 aa)) adopts an SBP-type zinc-finger fold. Residues C175, C180, C197, H200, C216, C219, H223, and C235 each coordinate Zn(2+). The short motif at 232-248 (KRSCRKRLSHHNARRRK) is the Bipartite nuclear localization signal element.

Requires Zn(2+) as cofactor.

It is found in the nucleus. Its function is as follows. Trans-acting factor that binds specifically to the consensus nucleotide sequence 5'-TNCGTACAA-3'. The protein is Squamosa promoter-binding-like protein 11 (SPL11) of Arabidopsis thaliana (Mouse-ear cress).